We begin with the raw amino-acid sequence, 270 residues long: 4-hydroxy-tetrahydrodipicolinate reductase (270 aa).

Residues G9–M14 and E35 each bind NAD(+). R36 is a binding site for NADP(+). Residues G99–T101 and A123–Y126 contribute to the NAD(+) site. H156 serves as the catalytic Proton donor/acceptor. H157 contacts (S)-2,3,4,5-tetrahydrodipicolinate. K160 functions as the Proton donor in the catalytic mechanism. G166–T167 serves as a coordination point for (S)-2,3,4,5-tetrahydrodipicolinate.

It belongs to the DapB family.

It is found in the cytoplasm. The enzyme catalyses (S)-2,3,4,5-tetrahydrodipicolinate + NAD(+) + H2O = (2S,4S)-4-hydroxy-2,3,4,5-tetrahydrodipicolinate + NADH + H(+). The catalysed reaction is (S)-2,3,4,5-tetrahydrodipicolinate + NADP(+) + H2O = (2S,4S)-4-hydroxy-2,3,4,5-tetrahydrodipicolinate + NADPH + H(+). It functions in the pathway amino-acid biosynthesis; L-lysine biosynthesis via DAP pathway; (S)-tetrahydrodipicolinate from L-aspartate: step 4/4. Its function is as follows. Catalyzes the conversion of 4-hydroxy-tetrahydrodipicolinate (HTPA) to tetrahydrodipicolinate. The chain is 4-hydroxy-tetrahydrodipicolinate reductase from Mannheimia succiniciproducens (strain KCTC 0769BP / MBEL55E).